A 212-amino-acid chain; its full sequence is ATP-dependent Clp protease proteolytic subunit (212 aa).

Ser106 (nucleophile) is an active-site residue. His131 is a catalytic residue.

This sequence belongs to the peptidase S14 family. In terms of assembly, fourteen ClpP subunits assemble into 2 heptameric rings which stack back to back to give a disk-like structure with a central cavity, resembling the structure of eukaryotic proteasomes.

It localises to the cytoplasm. It catalyses the reaction Hydrolysis of proteins to small peptides in the presence of ATP and magnesium. alpha-casein is the usual test substrate. In the absence of ATP, only oligopeptides shorter than five residues are hydrolyzed (such as succinyl-Leu-Tyr-|-NHMec, and Leu-Tyr-Leu-|-Tyr-Trp, in which cleavage of the -Tyr-|-Leu- and -Tyr-|-Trp bonds also occurs).. Functionally, cleaves peptides in various proteins in a process that requires ATP hydrolysis. Has a chymotrypsin-like activity. Plays a major role in the degradation of misfolded proteins. The chain is ATP-dependent Clp protease proteolytic subunit from Rhodopseudomonas palustris (strain ATCC BAA-98 / CGA009).